Here is a 265-residue protein sequence, read N- to C-terminus: Indole-3-glycerol phosphate synthase (265 aa).

Belongs to the TrpC family.

The catalysed reaction is 1-(2-carboxyphenylamino)-1-deoxy-D-ribulose 5-phosphate + H(+) = (1S,2R)-1-C-(indol-3-yl)glycerol 3-phosphate + CO2 + H2O. Its pathway is amino-acid biosynthesis; L-tryptophan biosynthesis; L-tryptophan from chorismate: step 4/5. In Xanthomonas axonopodis pv. citri (strain 306), this protein is Indole-3-glycerol phosphate synthase.